We begin with the raw amino-acid sequence, 179 residues long: ATP synthase subunit delta (179 aa).

The protein belongs to the ATPase delta chain family. F-type ATPases have 2 components, F(1) - the catalytic core - and F(0) - the membrane proton channel. F(1) has five subunits: alpha(3), beta(3), gamma(1), delta(1), epsilon(1). F(0) has three main subunits: a(1), b(2) and c(10-14). The alpha and beta chains form an alternating ring which encloses part of the gamma chain. F(1) is attached to F(0) by a central stalk formed by the gamma and epsilon chains, while a peripheral stalk is formed by the delta and b chains.

The protein resides in the cell membrane. In terms of biological role, f(1)F(0) ATP synthase produces ATP from ADP in the presence of a proton or sodium gradient. F-type ATPases consist of two structural domains, F(1) containing the extramembraneous catalytic core and F(0) containing the membrane proton channel, linked together by a central stalk and a peripheral stalk. During catalysis, ATP synthesis in the catalytic domain of F(1) is coupled via a rotary mechanism of the central stalk subunits to proton translocation. This protein is part of the stalk that links CF(0) to CF(1). It either transmits conformational changes from CF(0) to CF(1) or is implicated in proton conduction. The protein is ATP synthase subunit delta of Listeria monocytogenes serovar 1/2a (strain ATCC BAA-679 / EGD-e).